Here is a 330-residue protein sequence, read N- to C-terminus: Membrane-associated protein VIPP1, chloroplastic (330 aa).

The N-terminal 64 residues, 1 to 64 (MALKASPVTG…LRLACDNRLR (64 aa)), are a transit peptide targeting the chloroplast. 2 coiled-coil regions span residues 124–259 (SQKQ…LTQI) and 312–329 (KDSE…KAND). A disordered region spans residues 287 to 312 (LSGSSKKGELPPGRSTVAASTRYPFK).

Belongs to the PspA/Vipp/IM30 family. As to quaternary structure, homomultimer. Complex formation involves interaction via the central alpha-helical domain (71-286).

It is found in the plastid. The protein resides in the chloroplast inner membrane. Its subcellular location is the chloroplast thylakoid membrane. Required for plastid vesicle formation and thylakoid membrane biogenesis, but not for functional assembly of thylakoid protein complexes. The protein is Membrane-associated protein VIPP1, chloroplastic of Arabidopsis thaliana (Mouse-ear cress).